A 2332-amino-acid chain; its full sequence is Genome polyprotein (2332 aa).

The Peptidase C28 domain maps to 1-201 (MNTTNCFIAL…WKTQVQKKLK (201 aa)). At 1–1480 (MNTTNCFIAL…SFVKRAFKRL (1480 aa)) the chain is on the cytoplasmic side. Residues Cys51, His148, and Asp163 each act as for leader protease activity in the active site. Disordered stretches follow at residues 199 to 218 (KLKG…QSGN) and 237 to 264 (TQLG…TNTQ). Gly202 is lipidated: N-myristoyl glycine; by host. Polar residues-rich tracts occupy residues 204–218 (GQSS…QSGN) and 237–251 (TQLG…SNEG). Residues 252-264 (STDTTSTHTTNTQ) are compositionally biased toward low complexity. Positions 789–797 (ALLRAATYY) are antigenic epitope. Residues 867–870 (RSGD) carry the Cell attachment site motif. The SF3 helicase domain maps to 1189-1353 (NVHIANLCKV…DGYKINNKLD (165 aa)). Residue 1217-1224 (GKSGQGKS) coordinates ATP. An intramembrane segment occupies 1481-1501 (KENFEIVALCLTLLANIVIMI). Over 1502–2332 (RETRKRQKMV…RWVNAVCGDA (831 aa)) the chain is Cytoplasmic. Composition is skewed to basic and acidic residues over residues 1529 to 1538 (KTLDEAEKNP) and 1549 to 1563 (FRER…RDDV). The disordered stretch occupies residues 1529 to 1588 (KTLDEAEKNPLETSGASTVGFRERSLTGQKVRDDVSSEPAQPAEDQPQAEGPYSGPLERQ). O-(5'-phospho-RNA)-tyrosine occurs at positions 1581, 1604, and 1628. One can recognise a Peptidase C3 domain in the interval 1652-1848 (APPTDLQKMV…YCSCVSRSML (197 aa)). His1695 acts as the For protease 3C activity; Proton donor/acceptor in catalysis. Residues Asp1733 and Cys1812 each act as for protease 3C activity in the active site. The Nuclear localization signal signature appears at 1878 to 1886 (MRKTKLAPT). A RdRp catalytic domain is found at 2096 to 2214 (RNVWDVDYSA…ASDYDLDFEA (119 aa)). Residue Asp2200 is the For RdRp activity of the active site.

Belongs to the picornaviruses polyprotein family. As to quaternary structure, interacts with host ISG15. In terms of assembly, interacts (via R-G-D motif) with host ITGAV/ITGB6. Interacts with host MAVS; this interaction inhibits binding of host TRAF3 to MAVS, thereby suppressing interferon-mediated responses. Forms homooligomers. As to quaternary structure, homohexamer. Interacts with host VIM. Interacts with host BECN1. In terms of assembly, interacts with host DCTN3. Interacts with RNA-dependent RNA polymerase; this interaction allows 3B-1 to binds 2 polymerases and act as a primer. It also allows the recruitment of the RNA-dependent RNA polymerase to host membranes. As to quaternary structure, interacts with RNA-dependent RNA polymerase; this interaction allows 3B-2 to act as a primer. In terms of assembly, interacts with RNA-dependent RNA polymerase; this interaction allows 3B-3 to act as a primer. Interacts with 3B-1; this interaction allows 3B-1 to binds 2 polymerases and act as a primer. It also allows the recruitment of the RNA-dependent RNA polymerase to host membranes. Interacts with 3B-2; this interaction allows 3B-2 to act as a primer. Interacts with 3B-3; this interaction allows 3B-3 to act as a primer. Removes six residues from its own C-terminus, generating sLb(pro). In terms of processing, specific enzymatic cleavages in vivo by the viral proteases yield a variety of precursors and mature proteins. The polyprotein seems to be cotranslationally cleaved at the 2A/2B junction by a ribosomal skip from one codon to the next without formation of a peptide bond. This process would release the L-P1-2A peptide from the translational complex. Post-translationally, during virion maturation, immature virions are rendered infectious following cleavage of VP0 into VP4 and VP2. This maturation seems to be an autocatalytic event triggered by the presence of RNA in the capsid and is followed by a conformational change of the particle. Myristoylation is required during RNA encapsidation and formation of the mature virus particle. In terms of processing, uridylylated by the polymerase and covalently linked to the 5'-end of genomic RNA. These uridylylated forms act as a nucleotide-peptide primer for the polymerase.

The protein localises to the host nucleus. It is found in the host cytoplasm. The protein resides in the virion. Its subcellular location is the host endoplasmic reticulum membrane. It localises to the host cytoplasmic vesicle membrane. It catalyses the reaction Autocatalytically cleaves itself from the polyprotein of the foot-and-mouth disease virus by hydrolysis of a Lys-|-Gly bond, but then cleaves host cell initiation factor eIF-4G at bonds -Gly-|-Arg- and -Lys-|-Arg-.. It carries out the reaction a ribonucleoside 5'-triphosphate + H2O = a ribonucleoside 5'-diphosphate + phosphate + H(+). The enzyme catalyses RNA(n) + a ribonucleoside 5'-triphosphate = RNA(n+1) + diphosphate. The catalysed reaction is Selective cleavage of Gln-|-Gly bond in the poliovirus polyprotein. In other picornavirus reactions Glu may be substituted for Gln, and Ser or Thr for Gly.. Functionally, autocatalytically cleaves itself from the polyprotein at the L/VP0 junction. Also cleaves the host translation initiation factors EIF4G1 and EIF4G3, in order to shut off the capped cellular mRNA transcription. Plays a role in counteracting host innate antiviral response using diverse mechanisms. Possesses a deubiquitinase activity acting on both 'Lys-48' and 'Lys-63'-linked polyubiquitin chains. In turn, inhibits the ubiquitination and subsequent activation of key signaling molecules of type I IFN response such as host RIGI, TBK1, TRAF3 and TRAF6. Inhibits host NF-kappa-B activity by inducing a decrease in RELA mRNA levels. Cleaves a peptide bond in the C-terminus of host ISG15, resulting in the damaging of this modifier that can no longer be attached to target proteins. Also cleaves host G3BP1 and G3BP2 in order to inhibit cytoplasmic stress granules assembly. Its function is as follows. Lies on the inner surface of the capsid shell. After binding to the host receptor, the capsid undergoes conformational changes. Capsid protein VP4 is released, capsid protein VP1 N-terminus is externalized, and together, they shape a pore in the host membrane through which the viral genome is translocated into the host cell cytoplasm. After genome has been released, the channel shrinks. In terms of biological role, forms an icosahedral capsid of pseudo T=3 symmetry with capsid proteins VP1 and VP3. The capsid is composed of 60 copies of each capsid protein organized in the form of twelve pentamers and encloses the viral positive strand RNA genome. Upon acidifcation in the endosome, dissociates into pentamers. Forms an icosahedral capsid of pseudo T=3 symmetry with capsid proteins VP2 and VP3. The capsid is composed of 60 copies of each capsid protein organized in the form of twelve pentamers and encloses the viral positive strand RNA genome. Mediates cell entry by attachment to an integrin receptor, usually host ITGAV/ITGB6. In addition, targets host MAVS to suppress type I IFN pathway. Upon acidifcation in the endosome, dissociates into pentamers. Functionally, forms an icosahedral capsid of pseudo T=3 symmetry with capsid proteins VP0 and VP3. The capsid is composed of 60 copies of each capsid protein organized in the form of twelve pentamers and encloses the viral positive strand RNA genome. Its function is as follows. Mediates self-processing of the polyprotein by a translational effect termed 'ribosome skipping'. Mechanistically, 2A-mediated cleavage occurs between the C-terminal glycine and the proline of the downstream protein 2B. In the case of foot-and-mouth disease virus, the 2A oligopeptide is post-translationally 'trimmed' from the C-terminus of the upstream protein 1D by 3C proteinase. In terms of biological role, plays an essential role in the virus replication cycle by acting as a viroporin. Creates a pore in the host endoplasmic reticulum and as a consequence releases Ca2+ in the cytoplasm of infected cell. In turn, high levels of cytoplasmic calcium may trigger membrane trafficking and transport of viral ER-associated proteins to viroplasms, sites of viral genome replication. Associates with and induces structural rearrangements of intracellular membranes. Triggers host autophagy by interacting with host BECN1 and thereby promotes viral replication. Participates in viral replication and interacts with host DHX9. Displays RNA-binding, nucleotide binding and NTPase activities. May play a role in virion morphogenesis and viral RNA encapsidation by interacting with the capsid protein VP3. Functionally, plays important roles in virus replication, virulence and host range. Cooperates with host DDX56 to inhibit IRF3 nuclear translocation and subsequent type I interferon production. Its function is as follows. Covalently linked to the 5'-end of both the positive-strand and negative-strand genomic RNAs. Acts as a genome-linked replication primer. In terms of biological role, covalently linked to the 5'-end0 of both the positive-strand and negative-strand genomic RNAs. Acts as a genome-linked replication primer. Cysteine protease that generates mature viral proteins from the precursor polyprotein. In addition to its proteolytic activity, binds to viral RNA and thus influences viral genome replication. RNA and substrate bind cooperatively to the protease. Functionally, RNA-directed RNA polymerase 3D-POL replicates genomic and antigenomic RNA by recognizing replications specific signals. Covalently attaches UMP to a tyrosine of VPg, which is used to prime RNA synthesis. The positive stranded RNA genome is first replicated at virus induced membranous vesicles, creating a dsRNA genomic replication form. This dsRNA is then used as template to synthesize positive stranded RNA genomes. ss(+)RNA genomes are either translated, replicated or encapsidated. This is Genome polyprotein from Bos taurus (Bovine).